Consider the following 754-residue polypeptide: FAD-dependent monooxygenase ntnA (754 aa).

A helical membrane pass occupies residues 3–23 (IPFKVLIIGGGVAGLTLAIML). The FAD site is built by E34, G48, and R109. The active site involves Y218. The FAD site is built by D311 and A324. 4 helical membrane passes run 446 to 466 (PLATFSWVTVLILAASSPWLA), 486 to 506 (AEVLELYISILSVSISGMWVI), 536 to 556 (ILPIYICFYILSSQSVVYYYM), and 563 to 583 (LGVAKALLPALLVVYTVSAVC). Residue N586 is glycosylated (N-linked (GlcNAc...) asparagine). A helical membrane pass occupies residues 595–615 (SWWFTADFAFPVVAYLSGMFL). N616 carries N-linked (GlcNAc...) asparagine glycosylation. 2 helical membrane-spanning segments follow: residues 644–664 (IAFVGFVAYAALASQYGTTIL) and 679–697 (LASLTTVTTLWCLYSAWEL). N701 carries N-linked (GlcNAc...) asparagine glycosylation. A helical transmembrane segment spans residues 712-732 (LTILSSTIFGGPAATLAGTFI).

Belongs to the paxM FAD-dependent monooxygenase family. FAD is required as a cofactor.

Its subcellular location is the membrane. It participates in secondary metabolite biosynthesis; terpenoid biosynthesis. Its function is as follows. FAD-dependent monooxygenase; part of the gene cluster that mediates the biosynthesis of the meroterpenoids nectripenoids A and B, as well as cochliquninone D and isocochliquninone E. The pathway probably begins with the HR-PKS ntnH that catalyzes two chain-extension steps to form a reduced triketide, which then primes the SAT domain in the NR-PKS ntnG to initiate three more cycles of extension to give a linear hexaketide corresponding to the polyketide part of nectripenoids. The FAD-dependent monooxygenase ntnJ then performs an oxidative decarboxylation at C11 of the ntnH/ntnG product, via an electrophilic aromatic hydroxylation with concomitant ipso-decarboxylation. The membrane-bound polyprenyl transferase ntnF then introduces a farnesyl group before the FAD-dependent monooxygenase ntnK functions as the first epoxidase on terminal C12'-C13' olefin, followed by a second epoxidation on C7'-C8' catalyzed by ntnA. The terpene cyclase/mutase ntnI then initiates the sequential tricyclic ring formation through protonation of the terminal epoxide and catalyzes the regioselective and stereoselective 6/6/6-tricyclic ring formation. The cytochrome P450 monooxygenase ntnM may then hydroxylate C1'. This Nectria sp protein is FAD-dependent monooxygenase ntnA.